Here is a 381-residue protein sequence, read N- to C-terminus: L-lactate dehydrogenase A-like 6B (381 aa).

NAD(+) contacts are provided by residues 101 to 106 and Arg148; that span reads DVDEGR. Residues Arg155, Asn187, and Arg218 each contribute to the substrate site. Asn187 contributes to the NAD(+) binding site. His242 functions as the Proton acceptor in the catalytic mechanism. Thr297 contributes to the substrate binding site.

Belongs to the LDH/MDH superfamily. LDH family.

It carries out the reaction (S)-lactate + NAD(+) = pyruvate + NADH + H(+). The protein operates within fermentation; pyruvate fermentation to lactate; (S)-lactate from pyruvate: step 1/1. This chain is L-lactate dehydrogenase A-like 6B (LDHAL6B), found in Bos taurus (Bovine).